The sequence spans 501 residues: Ribose import ATP-binding protein RbsA (501 aa).

ABC transporter domains follow at residues L5–K241 and A252–L495. G37–S44 contacts ATP.

The protein belongs to the ABC transporter superfamily. Ribose importer (TC 3.A.1.2.1) family. The complex is composed of an ATP-binding protein (RbsA), two transmembrane proteins (RbsC) and a solute-binding protein (RbsB).

The protein localises to the cell inner membrane. It catalyses the reaction D-ribose(out) + ATP + H2O = D-ribose(in) + ADP + phosphate + H(+). Its function is as follows. Part of the ABC transporter complex RbsABC involved in ribose import. Responsible for energy coupling to the transport system. The protein is Ribose import ATP-binding protein RbsA of Salmonella paratyphi A (strain ATCC 9150 / SARB42).